The chain runs to 2332 residues: Genome polyprotein (2332 aa).

The region spanning 1–201 (MNTTDCFIAL…WKAKVQRKLK (201 aa)) is the Peptidase C28 domain. Residues 1–1480 (MNTTDCFIAL…SFVKRAFKRL (1480 aa)) are Cytoplasmic-facing. Active-site for leader protease activity residues include cysteine 51, histidine 148, and aspartate 163. 2 disordered regions span residues 197 to 218 (QRKL…QSGN) and 238 to 265 (QLGD…NTQN). A lipid anchor (N-myristoyl glycine; by host) is attached at glycine 202. Composition is skewed to polar residues over residues 204–218 (GQSS…QSGN) and 238–251 (QLGD…SNEG). Residues 252 to 265 (STDTTSTHTTNTQN) show a composition bias toward low complexity. A disulfide bridge links cysteine 406 with cysteine 858. An antigenic epitope region spans residues 788-796 (ALLRASTYY). Residues 869-871 (RGD) carry the Cell attachment site motif. The region spanning 1189-1353 (NVHIANLCKV…DGYKINSKLD (165 aa)) is the SF3 helicase domain. 1217–1224 (GKSGQGKS) serves as a coordination point for ATP. An intramembrane segment occupies 1481–1501 (KENFEIVALCLTLLANIVIMI). The Cytoplasmic segment spans residues 1502–2332 (RETRKRQKMV…RWVNAVCGDA (831 aa)). Residues 1529-1538 (KTLDEAEKSP) are compositionally biased toward basic and acidic residues. Residues 1529 to 1584 (KTLDEAEKSPLETSGASTVGFRERTLPGQKACDDVNSEPAQPVEEQPQAEGPYAGP) are disordered. O-(5'-phospho-RNA)-tyrosine is present on residues tyrosine 1581, tyrosine 1604, and tyrosine 1628. One can recognise a Peptidase C3 domain in the interval 1652 to 1848 (APPTDLQKMV…YCSCVSRSML (197 aa)). The active-site For protease 3C activity; Proton donor/acceptor is histidine 1695. Catalysis depends on for protease 3C activity residues aspartate 1733 and cysteine 1812. 2 short sequence motifs (nuclear localization signal) span residues 1878–1886 (MRKTKLAPT) and 1879–1886 (RKTKLAPT). The RdRp catalytic domain occupies 2096 to 2214 (RNVWDVDYSA…ASDYDLDFEA (119 aa)). Aspartate 2200 functions as the For RdRp activity in the catalytic mechanism.

Belongs to the picornaviruses polyprotein family. Interacts with host ISG15. In terms of assembly, interacts (via R-G-D motif) with host ITGAV/ITGB6. Interacts with host MAVS; this interaction inhibits binding of host TRAF3 to MAVS, thereby suppressing interferon-mediated responses. As to quaternary structure, forms homooligomers. Homohexamer. Interacts with host VIM. Interacts with host BECN1. In terms of assembly, interacts with host DCTN3. As to quaternary structure, interacts with RNA-dependent RNA polymerase; this interaction allows 3B-1 to binds 2 polymerases and act as a primer. It also allows the recruitment of the RNA-dependent RNA polymerase to host membranes. Interacts with RNA-dependent RNA polymerase; this interaction allows 3B-2 to act as a primer. In terms of assembly, interacts with RNA-dependent RNA polymerase; this interaction allows 3B-3 to act as a primer. As to quaternary structure, interacts with 3B-1; this interaction allows 3B-1 to binds 2 polymerases and act as a primer. It also allows the recruitment of the RNA-dependent RNA polymerase to host membranes. Interacts with 3B-2; this interaction allows 3B-2 to act as a primer. Interacts with 3B-3; this interaction allows 3B-3 to act as a primer. In terms of processing, removes six residues from its own C-terminus, generating sLb(pro). Specific enzymatic cleavages in vivo by the viral proteases yield a variety of precursors and mature proteins. The polyprotein seems to be cotranslationally cleaved at the 2A/2B junction by a ribosomal skip from one codon to the next without formation of a peptide bond. This process would release the L-P1-2A peptide from the translational complex. Post-translationally, during virion maturation, immature virions are rendered infectious following cleavage of VP0 into VP4 and VP2. This maturation seems to be an autocatalytic event triggered by the presence of RNA in the capsid and is followed by a conformational change of the particle. In terms of processing, myristoylation is required during RNA encapsidation and formation of the mature virus particle. Uridylylated by the polymerase and covalently linked to the 5'-end of genomic RNA. These uridylylated forms act as a nucleotide-peptide primer for the polymerase. Post-translationally, the disulfide bond between VP1 and VP2 occurs after release of virus from the host cell.

The protein resides in the host nucleus. It is found in the host cytoplasm. Its subcellular location is the virion. It localises to the host endoplasmic reticulum membrane. The protein localises to the host cytoplasmic vesicle membrane. It catalyses the reaction Autocatalytically cleaves itself from the polyprotein of the foot-and-mouth disease virus by hydrolysis of a Lys-|-Gly bond, but then cleaves host cell initiation factor eIF-4G at bonds -Gly-|-Arg- and -Lys-|-Arg-.. The enzyme catalyses a ribonucleoside 5'-triphosphate + H2O = a ribonucleoside 5'-diphosphate + phosphate + H(+). It carries out the reaction RNA(n) + a ribonucleoside 5'-triphosphate = RNA(n+1) + diphosphate. The catalysed reaction is Selective cleavage of Gln-|-Gly bond in the poliovirus polyprotein. In other picornavirus reactions Glu may be substituted for Gln, and Ser or Thr for Gly.. In terms of biological role, autocatalytically cleaves itself from the polyprotein at the L/VP0 junction. Also cleaves the host translation initiation factors EIF4G1 and EIF4G3, in order to shut off the capped cellular mRNA transcription. Plays a role in counteracting host innate antiviral response using diverse mechanisms. Possesses a deubiquitinase activity acting on both 'Lys-48' and 'Lys-63'-linked polyubiquitin chains. In turn, inhibits the ubiquitination and subsequent activation of key signaling molecules of type I IFN response such as host RIGI, TBK1, TRAF3 and TRAF6. Inhibits host NF-kappa-B activity by inducing a decrease in RELA mRNA levels. Cleaves a peptide bond in the C-terminus of host ISG15, resulting in the damaging of this modifier that can no longer be attached to target proteins. Also cleaves host G3BP1 and G3BP2 in order to inhibit cytoplasmic stress granules assembly. Its function is as follows. Lies on the inner surface of the capsid shell. After binding to the host receptor, the capsid undergoes conformational changes. Capsid protein VP4 is released, capsid protein VP1 N-terminus is externalized, and together, they shape a pore in the host membrane through which the viral genome is translocated into the host cell cytoplasm. After genome has been released, the channel shrinks. Functionally, forms an icosahedral capsid of pseudo T=3 symmetry with capsid proteins VP1 and VP3. The capsid is composed of 60 copies of each capsid protein organized in the form of twelve pentamers and encloses the viral positive strand RNA genome. Upon acidifcation in the endosome, dissociates into pentamers. Forms an icosahedral capsid of pseudo T=3 symmetry with capsid proteins VP2 and VP3. The capsid is composed of 60 copies of each capsid protein organized in the form of twelve pentamers and encloses the viral positive strand RNA genome. Mediates cell entry by attachment to an integrin receptor, usually host ITGAV/ITGB6, via a conserved arginine-glycine-aspartic acid (R-G-D) motif. In addition, targets host MAVS to suppress type I IFN pathway. Upon acidifcation in the endosome, dissociates into pentamers. In terms of biological role, forms an icosahedral capsid of pseudo T=3 symmetry with capsid proteins VP0 and VP3. The capsid is composed of 60 copies of each capsid protein organized in the form of twelve pentamers and encloses the viral positive strand RNA genome. Upon acidifcation in the endosome, dissociates into pentamers. Its function is as follows. Mediates self-processing of the polyprotein by a translational effect termed 'ribosome skipping'. Mechanistically, 2A-mediated cleavage occurs between the C-terminal glycine and the proline of the downstream protein 2B. In the case of foot-and-mouth disease virus, the 2A oligopeptide is post-translationally 'trimmed' from the C-terminus of the upstream protein 1D by 3C proteinase. Functionally, plays an essential role in the virus replication cycle by acting as a viroporin. Creates a pore in the host endoplasmic reticulum and as a consequence releases Ca2+ in the cytoplasm of infected cell. In turn, high levels of cytoplasmic calcium may trigger membrane trafficking and transport of viral ER-associated proteins to viroplasms, sites of viral genome replication. Associates with and induces structural rearrangements of intracellular membranes. Triggers host autophagy by interacting with host BECN1 and thereby promotes viral replication. Participates in viral replication and interacts with host DHX9. Displays RNA-binding, nucleotide binding and NTPase activities. May play a role in virion morphogenesis and viral RNA encapsidation by interacting with the capsid protein VP3. In terms of biological role, plays important roles in virus replication, virulence and host range. Cooperates with host DDX56 to inhibit IRF3 nuclear translocation and subsequent type I interferon production. Its function is as follows. Covalently linked to the 5'-end of both the positive-strand and negative-strand genomic RNAs. Acts as a genome-linked replication primer. Functionally, cysteine protease that generates mature viral proteins from the precursor polyprotein. In addition to its proteolytic activity, binds to viral RNA and thus influences viral genome replication. RNA and substrate bind cooperatively to the protease. RNA-directed RNA polymerase 3D-POL replicates genomic and antigenomic RNA by recognizing replications specific signals. Covalently attaches UMP to a tyrosine of VPg, which is used to prime RNA synthesis. The positive stranded RNA genome is first replicated at virus induced membranous vesicles, creating a dsRNA genomic replication form. This dsRNA is then used as template to synthesize positive stranded RNA genomes. ss(+)RNA genomes are either translated, replicated or encapsidated. This is Genome polyprotein from Bos taurus (Bovine).